The chain runs to 63 residues: Small ribosomal subunit protein uS14 (63 aa).

4 residues coordinate Zn(2+): Cys-26, Cys-29, Cys-42, and Cys-45.

It belongs to the universal ribosomal protein uS14 family. Zinc-binding uS14 subfamily. In terms of assembly, part of the 30S ribosomal subunit. Contacts proteins S3 and S10. The cofactor is Zn(2+).

In terms of biological role, binds 16S rRNA, required for the assembly of 30S particles and may also be responsible for determining the conformation of the 16S rRNA at the A site. The protein is Small ribosomal subunit protein uS14 of Gloeobacter violaceus (strain ATCC 29082 / PCC 7421).